We begin with the raw amino-acid sequence, 23 residues long: SLVQFEMMIMEVAKRSGLLWYSA.

This sequence belongs to the phospholipase A2 family. Group II subfamily. D49 sub-subfamily. The cofactor is Ca(2+). Post-translationally, contains 7 disulfide bonds. As to expression, expressed by the venom gland.

It is found in the secreted. The enzyme catalyses a 1,2-diacyl-sn-glycero-3-phosphocholine + H2O = a 1-acyl-sn-glycero-3-phosphocholine + a fatty acid + H(+). Functionally, snake venom phospholipase A2 (PLA2) that shows high lipolytic (1048 umol/mg/min) and weak ADP-induced platelet aggregation activities. Also shows weak anticoagulant activity (IC(50) is less than 1.0 uM). PLA2 catalyzes the calcium-dependent hydrolysis of the 2-acyl groups in 3-sn-phosphoglycerides. This Crotalus horridus (Timber rattlesnake) protein is Acidic phospholipase CHA-E6a.